The chain runs to 1765 residues: Sodium channel protein type 11 subunit alpha (1765 aa).

Residues M1 to S126 are Cytoplasmic-facing. The I repeat unit spans residues F115–R403. Residues V127–N148 traverse the membrane as a helical segment. The Extracellular segment spans residues S149 to D157. The helical transmembrane segment at I158 to A177 threads the bilayer. Residues R178–R189 are Cytoplasmic-facing. The chain crosses the membrane as a helical span at residues D190–P209. At G210–S216 the chain is on the extracellular side. An N-linked (GlcNAc...) asparagine glycan is attached at N214. The helical; Voltage-sensor transmembrane segment at A217 to L236 threads the bilayer. At K237–D252 the chain is on the cytoplasmic side. The chain crosses the membrane as a helical span at residues V253–L266. Residues V267–N339 are Extracellular-facing. A disulfide bridge links C280 with C317. N-linked (GlcNAc...) asparagine glycosylation is found at N319 and N333. The pore-forming intramembrane region spans F340 to L364. Residues R365–F371 are Extracellular-facing. A helical membrane pass occupies residues V372–A397. Over Y398–T567 the chain is Cytoplasmic. The stretch at C554–Q820 is one II repeat. Residues I568–V591 traverse the membrane as a helical segment. The Extracellular segment spans residues E592–T602. The chain crosses the membrane as a helical span at residues I603–L626. Residues D627 to H634 lie on the Cytoplasmic side of the membrane. Residues G635–L656 traverse the membrane as a helical segment. Residues S657 to S662 lie on the Extracellular side of the membrane. N660 carries N-linked (GlcNAc...) asparagine glycosylation. A helical; Voltage-sensor transmembrane segment spans residues F663–L682. Topologically, residues N683–G697 are cytoplasmic. A helical membrane pass occupies residues N698 to T720. At K721–N741 the chain is on the extracellular side. N-linked (GlcNAc...) asparagine glycosylation is present at N723. The segment at residues F742–W762 is an intramembrane region (pore-forming). The Extracellular segment spans residues G763–P772. Residues C764 and C774 are joined by a disulfide bond. A helical transmembrane segment spans residues L773–L798. Residues N799–Q1029 lie on the Cytoplasmic side of the membrane. One copy of the III repeat lies at N1022 to L1319. A helical membrane pass occupies residues I1030–I1052. The Extracellular portion of the chain corresponds to F1053 to K1066. A helical transmembrane segment spans residues L1067–F1092. The Cytoplasmic segment spans residues R1093–S1098. The chain crosses the membrane as a helical span at residues A1099 to M1116. Residue N1117 is a topological domain, extracellular. Residues L1118–F1139 traverse the membrane as a helical; Voltage-sensor segment. Residues E1140–N1158 are Cytoplasmic-facing. A helical transmembrane segment spans residues V1159–G1180. Topologically, residues K1181–V1223 are extracellular. N-linked (GlcNAc...) asparagine glycans are attached at residues N1187, N1202, N1207, and N1210. An intramembrane region (pore-forming) is located at residues G1224–A1245. Residues A1246–N1261 are Extracellular-facing. A helical transmembrane segment spans residues L1262–I1288. The Cytoplasmic portion of the chain corresponds to D1289 to D1341. Residues I1328–Q1619 form an IV repeat. A helical membrane pass occupies residues L1342 to A1365. Topologically, residues E1366–K1376 are extracellular. A helical membrane pass occupies residues T1377–L1400. At R1401–T1406 the chain is on the cytoplasmic side. A helical membrane pass occupies residues N1407–E1430. Residues D1431–L1440 lie on the Extracellular side of the membrane. Residues F1441–R1463 traverse the membrane as a helical; Voltage-sensor segment. Residues T1464 to N1478 are Cytoplasmic-facing. Residues I1479–V1501 form a helical membrane-spanning segment. Residues K1502 to T1515 lie on the Extracellular side of the membrane. The segment at residues F1516–P1538 is an intramembrane region (pore-forming). Residues M1539–I1559 are Extracellular-facing. N1547 is a glycosylation site (N-linked (GlcNAc...) asparagine). Residues A1560–L1584 form a helical membrane-spanning segment. The Cytoplasmic segment spans residues E1585 to D1765.

This sequence belongs to the sodium channel (TC 1.A.1.10) family. Nav1.9/SCN11A subfamily. In terms of assembly, the voltage-resistant sodium channel consists of an ion conducting pore forming alpha-subunit regulated by one or more auxiliary subunits SCN1B, SCN2B and SCN3B. In terms of tissue distribution, expressed (at protein level) in myenteric sensory neurons. Expressed in small sensory neurons of the dorsal root ganglia (C-fiber neurons) and trigeminal ganglia.

The protein localises to the cell membrane. The enzyme catalyses Na(+)(in) = Na(+)(out). With respect to regulation, activity is not sensitive to inhibition by tetrodotoxin. Functionally, sodium channel mediating the voltage-dependent sodium ion permeability of excitable membranes. Assuming opened or closed conformations in response to the voltage difference across the membrane, the protein forms a sodium-selective channel through which sodium ions may pass in accordance with their electrochemical gradient. Involved in membrane depolarization during action potential in nociceptors which function as key relay stations for the electrical transmission of pain signals from the periphery to the central nervous system. Also involved in rapid BDNF-evoked neuronal depolarization. The sequence is that of Sodium channel protein type 11 subunit alpha from Rattus norvegicus (Rat).